The chain runs to 262 residues: MRRTLYRLMIELTNGRFTSYILRKFAQSRLSSIIIPSYVKVFQINQDEMEKGLKEYRTLHELFTRKLKEGKRSIDTDASSIVSPVDGVFADYGPIEDAKTFDIKGKRYSIVDMLGNEERAQRYAGGTYMVIYLSPSHYHRIHSPLSGSVTERFVLGRKSYPVNAAGMEYGKEPLSKNYRSVTEVNSDGEHMALVKVGAMFVNSIELLHERDTVQKGEEMAYFTFGSTVVLLFEKDMIEVVQELKSGQELRLGEKIATRLAHK.

Catalysis depends on charge relay system; for autoendoproteolytic cleavage activity residues Asp86, His142, and Ser226. The Schiff-base intermediate with substrate; via pyruvic acid; for decarboxylase activity role is filled by Ser226. Ser226 bears the Pyruvic acid (Ser); by autocatalysis mark.

It belongs to the phosphatidylserine decarboxylase family. PSD-B subfamily. Prokaryotic type I sub-subfamily. As to quaternary structure, heterodimer of a large membrane-associated beta subunit and a small pyruvoyl-containing alpha subunit. Pyruvate serves as cofactor. In terms of processing, is synthesized initially as an inactive proenzyme. Formation of the active enzyme involves a self-maturation process in which the active site pyruvoyl group is generated from an internal serine residue via an autocatalytic post-translational modification. Two non-identical subunits are generated from the proenzyme in this reaction, and the pyruvate is formed at the N-terminus of the alpha chain, which is derived from the carboxyl end of the proenzyme. The autoendoproteolytic cleavage occurs by a canonical serine protease mechanism, in which the side chain hydroxyl group of the serine supplies its oxygen atom to form the C-terminus of the beta chain, while the remainder of the serine residue undergoes an oxidative deamination to produce ammonia and the pyruvoyl prosthetic group on the alpha chain. During this reaction, the Ser that is part of the protease active site of the proenzyme becomes the pyruvoyl prosthetic group, which constitutes an essential element of the active site of the mature decarboxylase.

Its subcellular location is the cell membrane. It catalyses the reaction a 1,2-diacyl-sn-glycero-3-phospho-L-serine + H(+) = a 1,2-diacyl-sn-glycero-3-phosphoethanolamine + CO2. It functions in the pathway phospholipid metabolism; phosphatidylethanolamine biosynthesis; phosphatidylethanolamine from CDP-diacylglycerol: step 2/2. Functionally, catalyzes the formation of phosphatidylethanolamine (PtdEtn) from phosphatidylserine (PtdSer). This chain is Phosphatidylserine decarboxylase proenzyme, found in Bacillus thuringiensis subsp. konkukian (strain 97-27).